Here is a 418-residue protein sequence, read N- to C-terminus: Inner capsid protein sigma-2 (418 aa).

Belongs to the orthoreovirus sigma-1 protein family. In terms of assembly, interacts with protein mu-NS; in viral inclusions.

It localises to the virion. Inner capsid (core) component. In Mammalia (T2J), this protein is Inner capsid protein sigma-2 (S2).